The sequence spans 24 residues: Myotoxin TmC4-47.2 (24 aa).

A disordered region spans residues 1 to 24; it reads KASSSAPKGWTHHGSRFTFHRGSM. Residues 10–24 show a composition bias toward basic residues; it reads WTHHGSRFTFHRGSM. A C-type lectin domain is found at 13–24; sequence HGSRFTFHRGSM.

In terms of tissue distribution, expressed by the venom gland.

Its subcellular location is the secreted. In terms of biological role, able to depolarize frog skeletal muscle fibers, but has no effects on squid giant axons. Tetrodotoxin is able to partially antagonize the depolarization. Induces myonecrosis. This chain is Myotoxin TmC4-47.2, found in Thalassophryne maculosa (Cano toadfish).